Consider the following 425-residue polypeptide: Tol-Pal system protein TolB (425 aa).

The signal sequence occupies residues 1-23; that stretch reads MQMMKKRILLCLLVGMTCLPVLA.

It belongs to the TolB family. The Tol-Pal system is composed of five core proteins: the inner membrane proteins TolA, TolQ and TolR, the periplasmic protein TolB and the outer membrane protein Pal. They form a network linking the inner and outer membranes and the peptidoglycan layer.

Its subcellular location is the periplasm. Functionally, part of the Tol-Pal system, which plays a role in outer membrane invagination during cell division and is important for maintaining outer membrane integrity. This is Tol-Pal system protein TolB from Albidiferax ferrireducens (strain ATCC BAA-621 / DSM 15236 / T118) (Rhodoferax ferrireducens).